A 108-amino-acid polypeptide reads, in one-letter code: Ig kappa chain V-V region HP R16.7 (108 aa).

A framework-1 region spans residues 1 to 23; that stretch reads DIQMTQTTSSLSASLGDRVTISC. The cysteines at positions 23 and 88 are disulfide-linked. The segment at 24 to 34 is complementarity-determining-1; sequence RASQDISNYLN. The interval 35–49 is framework-2; the sequence is WYQQKPDGTVKLLIY. Positions 50–56 are complementarity-determining-2; that stretch reads YTSRLHS. Residues 57–88 are framework-3; it reads GVPSRFSGSGSGTDYSLTISNLEQEDIATYFC. The complementarity-determining-3 stretch occupies residues 89–97; that stretch reads QQGNSLPRT. Residues 98 to 108 form a framework-4 region; sequence FGGGTKLEIKR.

The chain is Ig kappa chain V-V region HP R16.7 from Mus musculus (Mouse).